The chain runs to 498 residues: Flagellin (498 aa).

This sequence belongs to the bacterial flagellin family.

The protein resides in the secreted. The protein localises to the bacterial flagellum. Functionally, flagellin is the subunit protein which polymerizes to form the filaments of bacterial flagella. The polypeptide is Flagellin (fliC) (Escherichia coli (strain K12)).